We begin with the raw amino-acid sequence, 156 residues long: Ribonuclease pancreatic (156 aa).

The first 28 residues, 1-28 (MALEKSLVRLLLLVLILLVLGWVQPSLG), serve as a signal peptide directing secretion. Residues 33–43 (AKKFQRQHMDS) show a composition bias toward basic and acidic residues. Positions 33 to 53 (AKKFQRQHMDSDSSPSSSSTY) are disordered. Positions 35 and 38 each coordinate substrate. Catalysis depends on histidine 40, which acts as the Proton acceptor. Disulfide bonds link cysteine 54–cysteine 112, cysteine 68–cysteine 123, cysteine 86–cysteine 138, and cysteine 93–cysteine 100. An N-linked (GlcNAc...) asparagine; partial glycan is attached at asparagine 62. Substrate is bound by residues 69–73 (KPVNT) and lysine 94. An N-linked (GlcNAc...) asparagine glycan is attached at asparagine 104. Arginine 113 provides a ligand contact to substrate. N-linked (GlcNAc...) asparagine glycosylation occurs at asparagine 116. The active-site Proton donor is the histidine 147.

Belongs to the pancreatic ribonuclease family. Monomer. Interacts with and forms tight 1:1 complexes with RNH1. Dimerization of two such complexes may occur. Interaction with RNH1 inhibits this protein. N-linked glycans are of complex type. In terms of tissue distribution, pancreas and other tissues and body fluids (indicating it may have other physiological functions besides its role in digestion).

The protein resides in the secreted. It catalyses the reaction an [RNA] containing cytidine + H2O = an [RNA]-3'-cytidine-3'-phosphate + a 5'-hydroxy-ribonucleotide-3'-[RNA].. It carries out the reaction an [RNA] containing uridine + H2O = an [RNA]-3'-uridine-3'-phosphate + a 5'-hydroxy-ribonucleotide-3'-[RNA].. Functionally, endonuclease that catalyzes the cleavage of RNA on the 3' side of pyrimidine nucleotides. Acts on single-stranded and double-stranded RNA. This is Ribonuclease pancreatic (RNASE1) from Homo sapiens (Human).